A 234-amino-acid polypeptide reads, in one-letter code: Large ribosomal subunit protein uL1 (234 aa).

Belongs to the universal ribosomal protein uL1 family. Part of the 50S ribosomal subunit.

In terms of biological role, binds directly to 23S rRNA. The L1 stalk is quite mobile in the ribosome, and is involved in E site tRNA release. Its function is as follows. Protein L1 is also a translational repressor protein, it controls the translation of the L11 operon by binding to its mRNA. The chain is Large ribosomal subunit protein uL1 from Sulfurovum sp. (strain NBC37-1).